We begin with the raw amino-acid sequence, 302 residues long: HTH-type transcriptional regulator AbgR (302 aa).

The 58-residue stretch at 5–62 folds into the HTH lysR-type domain; sequence VKIHQIRAFVEVARQGSIRGASRMLNMSQPALSKSIQELEEGLAAQLFFRRSKGVTLT. Positions 22–41 form a DNA-binding region, H-T-H motif; the sequence is IRGASRMLNMSQPALSKSIQ.

The protein belongs to the LysR transcriptional regulatory family.

Functionally, could be the regulator of the abg operon. The sequence is that of HTH-type transcriptional regulator AbgR (abgR) from Escherichia coli (strain K12).